Here is a 199-residue protein sequence, read N- to C-terminus: Translation initiation factor IF-3 (199 aa).

The protein belongs to the IF-3 family. As to quaternary structure, monomer.

It is found in the cytoplasm. IF-3 binds to the 30S ribosomal subunit and shifts the equilibrium between 70S ribosomes and their 50S and 30S subunits in favor of the free subunits, thus enhancing the availability of 30S subunits on which protein synthesis initiation begins. In Gloeobacter violaceus (strain ATCC 29082 / PCC 7421), this protein is Translation initiation factor IF-3.